Consider the following 1078-residue polypeptide: Disheveled-associated activator of morphogenesis 1 (1078 aa).

Residue serine 34 is modified to Phosphoserine. One can recognise a GBD/FH3 domain in the interval 45-420; that stretch reads LPMPPVEELD…QIVIQNDKGQ (376 aa). The stretch at 437-526 forms a coiled coil; it reads RMLVNENEVK…ELSRRAVCAS (90 aa). Disordered stretches follow at residues 456–480 and 524–585; these read RKEH…TQEK and CASI…PLGA. The 72-residue stretch at 528–599 folds into the FH1 domain; that stretch reads PGGPSPGAPG…PGAPMGLALK (72 aa). 2 stretches are compositionally biased toward pro residues: residues 530–539 and 548–585; these read GPSPGAPGGP and LLPP…PLGA. Positions 600-1009 constitute an FH2 domain; the sequence is KKSIPQPTNA…EERRARMEAQ (410 aa). Positions 693–702 are actin-binding; it reads AQNCNILLSR. A compositionally biased stretch (basic and acidic residues) spans 987–1027; sequence KQENENMRKKKEEEERRARMEAQLKEQRERERKMRKAKENS. Disordered stretches follow at residues 987-1034 and 1055-1078; these read KQEN…GEFD and RNRK…KLNF. A phosphoserine mark is found at serine 1027 and serine 1030. Residues 1027–1058 enclose the DAD domain; the sequence is SEESGEFDDLVSALRSGEVFDKDLSKLKRNRK. Basic and acidic residues predominate over residues 1067 to 1078; it reads SSRERPITKLNF.

It belongs to the formin homology family. Homodimer. Interacts with CIP4, FNBP1 and FNBP1L. Interacts with the SH3 domains of Abl, BTK, endophilin, spectrin and SRC. Binds specifically to GTP-bound CDC42 and RHOA. Interacts with INTU; INTU mediates the indirect interaction between DAAM1 and NPHP4. Interacts (via coiled coil domain) with KANK1 (via coiled coil domain). In terms of tissue distribution, expressed in all tissues examined.

The protein localises to the cytoplasm. The protein resides in the cytoskeleton. It is found in the cilium basal body. Functionally, binds to disheveled (Dvl) and Rho, and mediates Wnt-induced Dvl-Rho complex formation. May play a role as a scaffolding protein to recruit Rho-GDP and Rho-GEF, thereby enhancing Rho-GTP formation. Can direct nucleation and elongation of new actin filaments. Involved in building functional cilia. Involved in the organization of the subapical actin network in multiciliated epithelial cells. Together with DAAM2, required for myocardial maturation and sarcomere assembly. During cell division, may regulate RHOA activation that signals spindle orientation and chromosomal segregation. This chain is Disheveled-associated activator of morphogenesis 1 (DAAM1), found in Homo sapiens (Human).